The chain runs to 350 residues: C-X-C chemokine receptor type 1 (350 aa).

Residues 1 to 39 (MSNITDPQMWDFDDLNFTGMPPTDEGYSPCRLETETLNK) lie on the Extracellular side of the membrane. Asn-3 and Asn-16 each carry an N-linked (GlcNAc...) asparagine glycan. The helical transmembrane segment at 40–66 (YVVIITYALVFLLSLLGNSLVMLVILY) threads the bilayer. The Cytoplasmic segment spans residues 67–75 (SRVGRSVTD). A helical membrane pass occupies residues 76–96 (VYLLNLALADLLFALTLPIWA). The Extracellular segment spans residues 97–111 (ASKVNGWIFGTFLCK). Cys-110 and Cys-187 are joined by a disulfide. Residues 112–133 (VVSLLKEVNFYSGILLLACISV) form a helical membrane-spanning segment. Residues 134-154 (DRYLAIVHATRTLTQKRHLVK) lie on the Cytoplasmic side of the membrane. Residues 155-174 (FVCLGCWGLSMNLSLPFFLF) traverse the membrane as a helical segment. Topologically, residues 175–199 (RQAYHPNNSSPVCYEVLGNDTAKWR) are extracellular. A helical transmembrane segment spans residues 200 to 220 (MVLRILPHTFGFIVPLFVMLF). The Cytoplasmic portion of the chain corresponds to 221–242 (CYGFTLRTLFKAHMGQKHRAMR). A helical transmembrane segment spans residues 243–264 (VIFAVVLIFLLCWLPYNLVLLA). The Extracellular portion of the chain corresponds to 265–285 (DTLMRTQVIQESCERRNNIGR). Residues 286–308 (ALDATEILGFLHSCLNPIIYAFI) form a helical membrane-spanning segment. At 309 to 350 (GQNFRHGFLKILAMHGLVSKEFLARHRVTSYTSSSVNVSSNL) the chain is on the cytoplasmic side.

The protein belongs to the G-protein coupled receptor 1 family. In terms of assembly, interacts with IL8. Interacts with GNAI2.

Its subcellular location is the cell membrane. Functionally, receptor to interleukin-8, which is a powerful neutrophils chemotactic factor. Binding of IL-8 to the receptor causes activation of neutrophils. This response is mediated via a G-protein that activates a phosphatidylinositol-calcium second messenger system. The polypeptide is C-X-C chemokine receptor type 1 (CXCR1) (Pan troglodytes (Chimpanzee)).